The sequence spans 119 residues: EF-hand calcium-binding domain-containing protein 2 (119 aa).

The N-terminal stretch at 1–22 (MKVAVVLIVVLVVMMIGQETDS) is a signal peptide. In terms of domain architecture, EF-hand spans 82–117 (VDDNGFVEFKATYDVDGDGVVQVEEYETVVELTENL). Aspartate 95, aspartate 97, aspartate 99, and glutamate 106 together coordinate Ca(2+).

In terms of tissue distribution, component of the acid-soluble organic matrix of calcified layers of the shell (at protein level).

It localises to the secreted. This is EF-hand calcium-binding domain-containing protein 2 from Lottia gigantea (Giant owl limpet).